A 325-amino-acid chain; its full sequence is Tagatose 1,6-diphosphate aldolase (325 aa).

The protein belongs to the aldolase LacD family.

It carries out the reaction D-tagatofuranose 1,6-bisphosphate = D-glyceraldehyde 3-phosphate + dihydroxyacetone phosphate. The protein operates within carbohydrate metabolism; D-tagatose 6-phosphate degradation; D-glyceraldehyde 3-phosphate and glycerone phosphate from D-tagatose 6-phosphate: step 2/2. The sequence is that of Tagatose 1,6-diphosphate aldolase from Staphylococcus epidermidis (strain ATCC 12228 / FDA PCI 1200).